The sequence spans 551 residues: ETS domain-containing transcription factor ERF (551 aa).

Residues Thr-3 and Thr-7 each carry the phosphothreonine modification. Ser-20 and Ser-24 each carry phosphoserine. A DNA-binding region (ETS) is located at residues 27 to 107; sequence IQLWHFILEL…KGKRFTYKFN (81 aa). Disordered stretches follow at residues 130–169 and 184–304; these read QSAP…SSSS and GSVS…SHFS. Residues Ser-185 and Ser-190 each carry the phosphoserine modification. The segment covering 239–250 has biased composition (pro residues); that stretch reads RGGPEPLSPFPV. Residues 251 to 268 show a composition bias toward low complexity; the sequence is SPLAGPGSLLPPQLSPAL. The segment covering 289-301 has biased composition (gly residues); the sequence is SGGGGPSGSGGGS. Ser-327 carries the phosphoserine modification. The interval 342–476 is disordered; that stretch reads PQRPDKCPLP…KPEPGEAPGV (135 aa). Over residues 348 to 361 the composition is skewed to pro residues; the sequence is CPLPPMAPETPPVP. A compositionally biased stretch (low complexity) spans 362-373; sequence SSASSSSSSSSS. Residues 404 to 413 show a composition bias toward gly residues; sequence GGSGSGGLAE. A phosphoserine mark is found at Ser-433 and Ser-437. The segment covering 433–453 has biased composition (acidic residues); that stretch reads SEGESEEVEVTDISDEDEEDG. Residue Thr-443 is modified to Phosphothreonine. Ser-446 is subject to Phosphoserine. Glycyl lysine isopeptide (Lys-Gly) (interchain with G-Cter in SUMO2) cross-links involve residues Lys-467, Lys-483, and Lys-514. Positions 495 to 551 are disordered; that stretch reads RLEGGGCLSGGPEDEGEDKKVRGDVGPGESGGPLTPRRVSSDLQHATAQLSLEHRDS. Thr-529 carries the post-translational modification Phosphothreonine; by MAPK1. Ser-534, Ser-535, and Ser-551 each carry phosphoserine. Positions 535 to 544 are enriched in polar residues; sequence SDLQHATAQL.

The protein belongs to the ETS family. In terms of processing, phosphorylated by multiple kinases including MAPK1/ERK2 at THR-529. Phosphorylation regulates the activity of ERF. As to expression, expressed along the osteogenic margins of the developing calvarial bones, in a similar distribution to that observed for the master osteogenic regulator RUNX2.

Its subcellular location is the nucleus. In terms of biological role, potent transcriptional repressor that binds to the H1 element of the Ets2 promoter. May regulate other genes involved in cellular proliferation. Required for extraembryonic ectoderm differentiation, ectoplacental cone cavity closure, and chorioallantoic attachment. May be important for regulating trophoblast stem cell differentiation. The polypeptide is ETS domain-containing transcription factor ERF (Erf) (Mus musculus (Mouse)).